A 322-amino-acid chain; its full sequence is Epiphycan (322 aa).

The signal sequence occupies residues 1–19 (MKTLAGLVLGLVIFDAAVT). An O-linked (GalNAc...) threonine glycan is attached at T60. O-linked (Xyl...) (dermatan sulfate) serine glycosylation is present at S64. Residues 64–101 (SGNRELLTPPPQPEKAQEEEEEEESTPRLIDGSSPQEP) are disordered. S96 carries O-linked (GalNAc...) serine glycosylation. Residues 106–143 (VLGPHTNEDFPTCLLCTCISTTVYCDDHELDAIPPLPK) form the LRRNT domain. A disulfide bridge connects residues C118 and C130. LRR repeat units follow at residues 144 to 165 (NTAY…DFAS), 168 to 189 (DLKR…AFRK), 192 to 213 (QLRE…PTTL), 238 to 258 (DLHH…PLPE), and 259 to 280 (NLRA…TFCN). C279 and C312 are joined by a disulfide. Residues N283 and N302 are each glycosylated (N-linked (GlcNAc...) asparagine). One copy of the LRR 6 repeat lies at 290–310 (ALEDIRLDGNPINLSKTPQAY).

It belongs to the small leucine-rich proteoglycan (SLRP) family. SLRP class III subfamily. Post-translationally, the O-linked polysaccharides on Thr-60 and Ser-96 are probably the mucin type linked to GalNAc. There is one glycosaminoglycan chain, known to be dermatan sulfate, and it is probably the O-glycosylation at Ser-64. As to expression, cartilage, ligament, and placenta.

The protein resides in the secreted. The protein localises to the extracellular space. It is found in the extracellular matrix. Its function is as follows. May have a role in bone formation and also in establishing the ordered structure of cartilage through matrix organization. The polypeptide is Epiphycan (EPYC) (Homo sapiens (Human)).